The primary structure comprises 577 residues: Double-stranded RNA-binding protein Staufen homolog 1 (577 aa).

Residue serine 2 is modified to N-acetylserine. The segment covering 34 to 44 has biased composition (polar residues); that stretch reads SIPSTTSSLPS. Residues 34-55 form a disordered region; it reads SIPSTTSSLPSENAGRPIQNSA. The DRBM 1 domain maps to 72–162; it reads TPTVELNALC…AAKALRILQN (91 aa). Arginine 108 is modified (asymmetric dimethylarginine). Arginine 115 carries the post-translational modification Asymmetric dimethylarginine; alternate. Residue arginine 115 is modified to Omega-N-methylarginine; alternate. Serine 176 bears the Phosphoserine mark. The DRBM 2 domain occupies 184–251; sequence SEISQVFEIA…AIAVLEELKK (68 aa). Residue serine 278 is modified to Phosphoserine. The region spanning 286 to 354 is the DRBM 3 domain; that stretch reads NPISRLAQIQ…AENMLEILGF (69 aa). The tract at residues 360–397 is disordered; that stretch reads QPTKPALKSEEKTPIKKPGDGRKVTFFEPGSGDENGTS. The span at 366-384 shows a compositional bias: basic and acidic residues; the sequence is LKSEEKTPIKKPGDGRKVT. The residue at position 390 (serine 390) is a Phosphoserine.

As to quaternary structure, binds tubulin. Binds with low affinity single-stranded RNA or DNA homopolymers. Interacts with CASC3 in an RNA-dependent manner. Identified in a mRNP complex, at least composed of DHX9, DDX3X, ELAVL1, HNRNPU, IGF2BP1, ILF3, PABPC1, PCBP2, PTBP2, STAU1, STAU2, SYNCRIP and YBX1. In terms of assembly, (Microbial infection) Interacts with HERV-K rec and gag proteins. (Microbial infection) Interacts with HIV-1 GAG polyprotein. As to quaternary structure, (Microbial infection) Interacts with influenza virus NS1 protein. In terms of assembly, (Microbial infection) Interacts with Ebola virus NP, VP30 and VP35. Widely expressed. Expressed in brain, pancreas, heart, skeletal muscles, liver, lung, kidney and placenta.

It is found in the cytoplasm. The protein localises to the rough endoplasmic reticulum. Functionally, binds double-stranded RNA (regardless of the sequence) and tubulin. May play a role in specific positioning of mRNAs at given sites in the cell by cross-linking cytoskeletal and RNA components, and in stimulating their translation at the site. Its function is as follows. (Microbial infection) Plays a role in virus particles production of many viruses including of HIV-1, HERV-K, ebola virus and influenza virus. Acts by interacting with various viral proteins involved in particle budding process. This chain is Double-stranded RNA-binding protein Staufen homolog 1 (STAU1), found in Homo sapiens (Human).